A 179-amino-acid chain; its full sequence is NADH dehydrogenase [ubiquinone] 1 beta subcomplex subunit 9 (179 aa).

N-acetylalanine is present on alanine 2. Serine 85 carries the phosphoserine modification. Positions 136 to 162 (EVKQLQEETPPGGPLTEALPPARKEGD) are disordered.

The protein belongs to the complex I LYR family. In terms of assembly, mammalian complex I is composed of 45 different subunits.

The protein resides in the mitochondrion inner membrane. In terms of biological role, accessory subunit of the mitochondrial membrane respiratory chain NADH dehydrogenase (Complex I), that is believed to be not involved in catalysis. Complex I functions in the transfer of electrons from NADH to the respiratory chain. The immediate electron acceptor for the enzyme is believed to be ubiquinone. In Pan troglodytes (Chimpanzee), this protein is NADH dehydrogenase [ubiquinone] 1 beta subcomplex subunit 9 (NDUFB9).